The sequence spans 263 residues: Interleukin-22 receptor subunit alpha-2 (263 aa).

Positions 1–21 (MMPKHCFLGFLISFFLTGVAG) are cleaved as a signal peptide. Fibronectin type-III domains lie at 26–68 (HESL…KIMF), 100–161 (GQRQ…TKID), and 162–263 (PPVM…VEIP). A glycan (N-linked (GlcNAc...) asparagine) is linked at asparagine 56. The cysteines at positions 110 and 118 are disulfide-linked. N-linked (GlcNAc...) asparagine glycans are attached at residues asparagine 166, asparagine 171, asparagine 192, and asparagine 209. Cysteines 238 and 259 form a disulfide.

This sequence belongs to the type II cytokine receptor family. In terms of tissue distribution, expressed in placenta, spleen, breast, skin and lung. Also detected in intestinal tract, testis, brain, heart and thymus. No expression found in prostate, bladder, kidney, ovary, muscle, bone marrow, liver and uterus. Isoform 1 is expressed only in placenta. Isoform 2 is expressed in placenta and breast and at lower level in spleen, skin, thymus and stomach.

The protein localises to the secreted. Its function is as follows. Isoform 2 is a receptor for IL22. Binds to IL22, prevents interaction with the functional IL-22R complex and blocks the activity of IL22 (in vitro). May play an important role as an IL22 antagonist in the regulation of inflammatory responses. Isoform 1 may play a role in establishing and maintaining successful pregnancy. The protein is Interleukin-22 receptor subunit alpha-2 (IL22RA2) of Homo sapiens (Human).